We begin with the raw amino-acid sequence, 149 residues long: Deoxyuridine 5'-triphosphate nucleotidohydrolase (149 aa).

Substrate contacts are provided by residues 68-70, asparagine 81, 85-87, and lysine 95; these read RSG and TVD.

Belongs to the dUTPase family. Mg(2+) serves as cofactor.

The catalysed reaction is dUTP + H2O = dUMP + diphosphate + H(+). The protein operates within pyrimidine metabolism; dUMP biosynthesis; dUMP from dCTP (dUTP route): step 2/2. In terms of biological role, this enzyme is involved in nucleotide metabolism: it produces dUMP, the immediate precursor of thymidine nucleotides and it decreases the intracellular concentration of dUTP so that uracil cannot be incorporated into DNA. This is Deoxyuridine 5'-triphosphate nucleotidohydrolase from Wolinella succinogenes (strain ATCC 29543 / DSM 1740 / CCUG 13145 / JCM 31913 / LMG 7466 / NCTC 11488 / FDC 602W) (Vibrio succinogenes).